The sequence spans 314 residues: Olfactory receptor 1E2 (314 aa).

Topologically, residues 1 to 25 are extracellular; sequence MMGQNQTSISDFLLLGLPIQPEQQN. Asparagine 5 is a glycosylation site (N-linked (GlcNAc...) asparagine). A helical transmembrane segment spans residues 26–49; sequence LCYALFLAMYLTTLLGNLLIIVLI. Topologically, residues 50–57 are cytoplasmic; the sequence is RLDSHLHT. The chain crosses the membrane as a helical span at residues 58–79; sequence PMYLFLSNLSFSDLCFSSVTIP. At 80–100 the chain is on the extracellular side; sequence KLLQNMQNQDPSIPYADCLTQ. Cysteines 97 and 189 form a disulfide. The chain crosses the membrane as a helical span at residues 101–120; it reads MHFFLLFGDLESFLLVAMAY. The Cytoplasmic portion of the chain corresponds to 121–139; that stretch reads DRYVAICFPLHYTAIMSPM. The chain crosses the membrane as a helical span at residues 140–158; sequence LCLSVVALSWVLTTFHAML. At 159 to 196 the chain is on the extracellular side; that stretch reads HTLLMARLCFCADNVIPHFFCDMSALLKLACSDTRVNE. The helical transmembrane segment at 197–219 threads the bilayer; it reads WVIFIMGGLIVVIPFLLILGSYA. Residues 220-236 are Cytoplasmic-facing; it reads RIVSSILKVPSFKGICK. A helical transmembrane segment spans residues 237-260; the sequence is ALSTCGSHLSVVSLFYGTVIGLYL. The Extracellular segment spans residues 261-272; the sequence is CPSANSSTLKDT. An N-linked (GlcNAc...) asparagine glycan is attached at asparagine 265. Residues 273-292 traverse the membrane as a helical segment; sequence VMAMMYTVVTPMLNPFIYSL. Over 293–314 the chain is Cytoplasmic; the sequence is RNRDMKGALERVICKRKNPFLL.

The protein belongs to the G-protein coupled receptor 1 family.

Its subcellular location is the cell membrane. In terms of biological role, odorant receptor. In Pan troglodytes (Chimpanzee), this protein is Olfactory receptor 1E2 (OR1E2).